The sequence spans 345 residues: Phosphoribosylformylglycinamidine cyclo-ligase (345 aa).

The protein belongs to the AIR synthase family.

It localises to the cytoplasm. The catalysed reaction is 2-formamido-N(1)-(5-O-phospho-beta-D-ribosyl)acetamidine + ATP = 5-amino-1-(5-phospho-beta-D-ribosyl)imidazole + ADP + phosphate + H(+). It functions in the pathway purine metabolism; IMP biosynthesis via de novo pathway; 5-amino-1-(5-phospho-D-ribosyl)imidazole from N(2)-formyl-N(1)-(5-phospho-D-ribosyl)glycinamide: step 2/2. The chain is Phosphoribosylformylglycinamidine cyclo-ligase from Histophilus somni (strain 129Pt) (Haemophilus somnus).